Here is a 255-residue protein sequence, read N- to C-terminus: Adenosylcobinamide-GDP ribazoletransferase (255 aa).

7 consecutive transmembrane segments (helical) span residues isoleucine 33 to phenylalanine 53, phenylalanine 57 to leucine 77, valine 107 to alanine 127, phenylalanine 136 to phenylalanine 156, alanine 174 to phenylalanine 194, phenylalanine 196 to alanine 216, and isoleucine 234 to valine 254.

This sequence belongs to the CobS family. Mg(2+) is required as a cofactor.

The protein localises to the cell membrane. The enzyme catalyses alpha-ribazole + adenosylcob(III)inamide-GDP = adenosylcob(III)alamin + GMP + H(+). It carries out the reaction alpha-ribazole 5'-phosphate + adenosylcob(III)inamide-GDP = adenosylcob(III)alamin 5'-phosphate + GMP + H(+). It participates in cofactor biosynthesis; adenosylcobalamin biosynthesis; adenosylcobalamin from cob(II)yrinate a,c-diamide: step 7/7. In terms of biological role, joins adenosylcobinamide-GDP and alpha-ribazole to generate adenosylcobalamin (Ado-cobalamin). Also synthesizes adenosylcobalamin 5'-phosphate from adenosylcobinamide-GDP and alpha-ribazole 5'-phosphate. This Carboxydothermus hydrogenoformans (strain ATCC BAA-161 / DSM 6008 / Z-2901) protein is Adenosylcobinamide-GDP ribazoletransferase.